The chain runs to 207 residues: Large ribosomal subunit protein uL4 (207 aa).

It belongs to the universal ribosomal protein uL4 family. In terms of assembly, part of the 50S ribosomal subunit.

Its function is as follows. One of the primary rRNA binding proteins, this protein initially binds near the 5'-end of the 23S rRNA. It is important during the early stages of 50S assembly. It makes multiple contacts with different domains of the 23S rRNA in the assembled 50S subunit and ribosome. In terms of biological role, forms part of the polypeptide exit tunnel. The protein is Large ribosomal subunit protein uL4 of Rickettsia conorii (strain ATCC VR-613 / Malish 7).